The following is a 553-amino-acid chain: Dihydroxy-acid dehydratase (553 aa).

A Mg(2+)-binding site is contributed by Asp-78. [2Fe-2S] cluster is bound at residue Cys-119. Residues Asp-120 and Lys-121 each contribute to the Mg(2+) site. Lys-121 is subject to N6-carboxylysine. Cys-191 serves as a coordination point for [2Fe-2S] cluster. Glu-444 is a binding site for Mg(2+). Ser-470 (proton acceptor) is an active-site residue.

This sequence belongs to the IlvD/Edd family. In terms of assembly, homodimer. The cofactor is [2Fe-2S] cluster. Mg(2+) serves as cofactor.

It catalyses the reaction (2R)-2,3-dihydroxy-3-methylbutanoate = 3-methyl-2-oxobutanoate + H2O. The enzyme catalyses (2R,3R)-2,3-dihydroxy-3-methylpentanoate = (S)-3-methyl-2-oxopentanoate + H2O. Its pathway is amino-acid biosynthesis; L-isoleucine biosynthesis; L-isoleucine from 2-oxobutanoate: step 3/4. It participates in amino-acid biosynthesis; L-valine biosynthesis; L-valine from pyruvate: step 3/4. In terms of biological role, functions in the biosynthesis of branched-chain amino acids. Catalyzes the dehydration of (2R,3R)-2,3-dihydroxy-3-methylpentanoate (2,3-dihydroxy-3-methylvalerate) into 2-oxo-3-methylpentanoate (2-oxo-3-methylvalerate) and of (2R)-2,3-dihydroxy-3-methylbutanoate (2,3-dihydroxyisovalerate) into 2-oxo-3-methylbutanoate (2-oxoisovalerate), the penultimate precursor to L-isoleucine and L-valine, respectively. This is Dihydroxy-acid dehydratase from Methanosarcina barkeri (strain Fusaro / DSM 804).